The primary structure comprises 48 residues: ATP synthase protein 8 (48 aa).

The helical transmembrane segment at 13–33 (LTYGFLLLIILLVLFSQFLLP) threads the bilayer.

Belongs to the ATPase protein 8 family. As to quaternary structure, F-type ATPases have 2 components, CF(1) - the catalytic core - and CF(0) - the membrane proton channel.

Its subcellular location is the mitochondrion membrane. Its function is as follows. Mitochondrial membrane ATP synthase (F(1)F(0) ATP synthase or Complex V) produces ATP from ADP in the presence of a proton gradient across the membrane which is generated by electron transport complexes of the respiratory chain. F-type ATPases consist of two structural domains, F(1) - containing the extramembraneous catalytic core and F(0) - containing the membrane proton channel, linked together by a central stalk and a peripheral stalk. During catalysis, ATP synthesis in the catalytic domain of F(1) is coupled via a rotary mechanism of the central stalk subunits to proton translocation. Part of the complex F(0) domain. Minor subunit located with subunit a in the membrane. The sequence is that of ATP synthase protein 8 (ATP8) from Wickerhamomyces canadensis (Yeast).